The chain runs to 473 residues: 23S rRNA (uracil(1939)-C(5))-methyltransferase RlmD (473 aa).

The interval 6–27 is disordered; the sequence is KPSKGKNKSNVKGRVRGAGSGE. Residues 8–20 show a composition bias toward basic residues; it reads SKGKNKSNVKGRV. The 58-residue stretch at 42–99 folds into the TRAM domain; sequence DDINAANEAVTIDGMDWQGQGVARGDTLYFVDGALPGETVEIKALSSNKQIVNAKVTK. 4 residues coordinate [4Fe-4S] cluster: cysteine 112, cysteine 118, cysteine 121, and cysteine 199. S-adenosyl-L-methionine-binding residues include glutamine 304, phenylalanine 333, asparagine 338, glutamate 354, aspartate 381, and aspartate 402. Cysteine 428 functions as the Nucleophile in the catalytic mechanism.

The protein belongs to the class I-like SAM-binding methyltransferase superfamily. RNA M5U methyltransferase family. RlmD subfamily.

It carries out the reaction uridine(1939) in 23S rRNA + S-adenosyl-L-methionine = 5-methyluridine(1939) in 23S rRNA + S-adenosyl-L-homocysteine + H(+). In terms of biological role, catalyzes the formation of 5-methyl-uridine at position 1939 (m5U1939) in 23S rRNA. In Alteromonas naphthalenivorans, this protein is 23S rRNA (uracil(1939)-C(5))-methyltransferase RlmD.